A 168-amino-acid chain; its full sequence is CASP-like protein 1U1 (168 aa).

Residues 1-6 (MDGAAR) lie on the Cytoplasmic side of the membrane. The chain crosses the membrane as a helical span at residues 7–27 (AVSLFFRIAVVGLSVAAAVVM). The Extracellular segment spans residues 28 to 49 (ATASQAFPFNYGGAVSYTKYPA). A helical membrane pass occupies residues 50-70 (FVYFVVAAVVSAVCSAAALYL). Residues 71–80 (SVVREAAAGW) lie on the Cytoplasmic side of the membrane. A helical transmembrane segment spans residues 81 to 101 (AVALLDVVTMGLLFSAAGAVF). Residues 102 to 138 (AVRRMAPLYLGVAGADTVAGRWVNGEFCHAAGAFCWR) are Extracellular-facing. The helical transmembrane segment at 139-159 (VTTSAIICAFAAAAVSVAVLT) threads the bilayer. Residues 160–168 (KGARHRGKH) lie on the Cytoplasmic side of the membrane.

This sequence belongs to the Casparian strip membrane proteins (CASP) family. In terms of assembly, homodimer and heterodimers.

It localises to the cell membrane. The chain is CASP-like protein 1U1 from Oryza sativa subsp. japonica (Rice).